Here is a 540-residue protein sequence, read N- to C-terminus: Type II methyltransferase M.AccI (540 aa).

It belongs to the N(4)/N(6)-methyltransferase family. As to quaternary structure, monomer.

The enzyme catalyses a 2'-deoxyadenosine in DNA + S-adenosyl-L-methionine = an N(6)-methyl-2'-deoxyadenosine in DNA + S-adenosyl-L-homocysteine + H(+). Its function is as follows. A gamma subtype methylase, recognizes the double-stranded sequence 5'-GTMKAC-3', methylates A-5 on both strands, and protects the DNA from cleavage by the AccI endonuclease. In Acinetobacter calcoaceticus, this protein is Type II methyltransferase M.AccI (accIM).